The following is a 60-amino-acid chain: Large ribosomal subunit protein bL32 (60 aa).

It belongs to the bacterial ribosomal protein bL32 family.

This chain is Large ribosomal subunit protein bL32, found in Synechococcus sp. (strain JA-3-3Ab) (Cyanobacteria bacterium Yellowstone A-Prime).